Here is a 137-residue protein sequence, read N- to C-terminus: Holo-[acyl-carrier-protein] synthase (137 aa).

Mg(2+) contacts are provided by D8 and E57.

This sequence belongs to the P-Pant transferase superfamily. AcpS family. The cofactor is Mg(2+).

It localises to the cytoplasm. The enzyme catalyses apo-[ACP] + CoA = holo-[ACP] + adenosine 3',5'-bisphosphate + H(+). Its function is as follows. Transfers the 4'-phosphopantetheine moiety from coenzyme A to a Ser of acyl-carrier-protein. The protein is Holo-[acyl-carrier-protein] synthase of Cereibacter sphaeroides (strain ATCC 17025 / ATH 2.4.3) (Rhodobacter sphaeroides).